Consider the following 231-residue polypeptide: E3 ubiquitin-protein ligase At3g02290 (231 aa).

A compositionally biased stretch (basic and acidic residues) spans 103–118 (GSSHSHEEVEPLRSDS). Residues 103 to 125 (GSSHSHEEVEPLRSDSDADSESF) form a disordered region. The RING-type; atypical zinc-finger motif lies at 181–222 (CPTCLEEYTSENPKIVTKCSHHFHLSCIYEWMERSENCPVCG).

The protein localises to the cytoplasm. The enzyme catalyses S-ubiquitinyl-[E2 ubiquitin-conjugating enzyme]-L-cysteine + [acceptor protein]-L-lysine = [E2 ubiquitin-conjugating enzyme]-L-cysteine + N(6)-ubiquitinyl-[acceptor protein]-L-lysine.. The protein operates within protein modification; protein ubiquitination. Functionally, mediates E2-dependent protein ubiquitination. This is E3 ubiquitin-protein ligase At3g02290 from Arabidopsis thaliana (Mouse-ear cress).